The chain runs to 239 residues: Ribonuclease PH (239 aa).

Phosphate is bound by residues R86 and 124 to 126; that span reads GTR.

Belongs to the RNase PH family. Homohexameric ring arranged as a trimer of dimers.

It catalyses the reaction tRNA(n+1) + phosphate = tRNA(n) + a ribonucleoside 5'-diphosphate. Functionally, phosphorolytic 3'-5' exoribonuclease that plays an important role in tRNA 3'-end maturation. Removes nucleotide residues following the 3'-CCA terminus of tRNAs; can also add nucleotides to the ends of RNA molecules by using nucleoside diphosphates as substrates, but this may not be physiologically important. Probably plays a role in initiation of 16S rRNA degradation (leading to ribosome degradation) during starvation. This is Ribonuclease PH from Rickettsia akari (strain Hartford).